The primary structure comprises 75 residues: DNA-directed RNA polymerase subunit epsilon (75 aa).

This sequence belongs to the RNA polymerase subunit epsilon family. In terms of assembly, RNAP is composed of a core of 2 alpha, a beta and a beta' subunit. The core is associated with a delta subunit, and at least one of epsilon or omega. When a sigma factor is associated with the core the holoenzyme is formed, which can initiate transcription.

The enzyme catalyses RNA(n) + a ribonucleoside 5'-triphosphate = RNA(n+1) + diphosphate. A non-essential component of RNA polymerase (RNAP). This Lactobacillus johnsonii (strain CNCM I-12250 / La1 / NCC 533) protein is DNA-directed RNA polymerase subunit epsilon.